The chain runs to 281 residues: 18S rRNA (guanine-N(7))-methyltransferase (281 aa).

Positions 256–281 are disordered; the sequence is KARRRRQGKEVCPDTQYTGRKRKPRF.

The protein belongs to the class I-like SAM-binding methyltransferase superfamily. BUD23/WBSCR22 family. Heterodimer with TRMT112; this heterodimerization is necessary for the metabolic stability and activity of the catalytic subunit BUD23. Interacts with GRIP1. May be ubiquitinated and targeted to degradation in response to pro-inflammatory cytokine signaling.

The protein resides in the nucleus. It localises to the nucleoplasm. The protein localises to the cytoplasm. Its subcellular location is the perinuclear region. It catalyses the reaction a guanosine in 18S rRNA + S-adenosyl-L-methionine = an N(7)-methylguanosine in 18S rRNA + S-adenosyl-L-homocysteine. Its function is as follows. S-adenosyl-L-methionine-dependent methyltransferase that specifically methylates the N(7) position of a guanine in 18S rRNA. Requires the methyltransferase adapter protein TRM112 for full rRNA methyltransferase activity. Involved in the pre-rRNA processing steps leading to small-subunit rRNA production independently of its RNA-modifying catalytic activity. Important for biogenesis end export of the 40S ribosomal subunit independent on its methyltransferase activity. Locus-specific steroid receptor coactivator. Potentiates transactivation by glucocorticoid (NR3C1), mineralocorticoid (NR3C2), androgen (AR) and progesterone (PGR) receptors. Required for the maintenance of open chromatin at the TSC22D3/GILZ locus to facilitate NR3C1 loading on the response elements. Required for maintenance of dimethylation on histone H3 'Lys-79' (H3K79me2), although direct histone methyltransferase activity is not observed in vitro. In Bos taurus (Bovine), this protein is 18S rRNA (guanine-N(7))-methyltransferase.